Consider the following 932-residue polypeptide: Isoleucine--tRNA ligase (932 aa).

A 'HIGH' region motif is present at residues 58-68 (PYANGNLHLGH). Glu-567 lines the L-isoleucyl-5'-AMP pocket. The short motif at 608–612 (KMSKS) is the 'KMSKS' region element. Lys-611 is an ATP binding site. Cys-895, Cys-898, Cys-915, and Cys-918 together coordinate Zn(2+).

This sequence belongs to the class-I aminoacyl-tRNA synthetase family. IleS type 1 subfamily. Monomer. It depends on Zn(2+) as a cofactor.

The protein resides in the cytoplasm. The catalysed reaction is tRNA(Ile) + L-isoleucine + ATP = L-isoleucyl-tRNA(Ile) + AMP + diphosphate. Functionally, catalyzes the attachment of isoleucine to tRNA(Ile). As IleRS can inadvertently accommodate and process structurally similar amino acids such as valine, to avoid such errors it has two additional distinct tRNA(Ile)-dependent editing activities. One activity is designated as 'pretransfer' editing and involves the hydrolysis of activated Val-AMP. The other activity is designated 'posttransfer' editing and involves deacylation of mischarged Val-tRNA(Ile). In Azoarcus sp. (strain BH72), this protein is Isoleucine--tRNA ligase.